A 201-amino-acid chain; its full sequence is Glycerol-3-phosphate acyltransferase (201 aa).

The next 5 membrane-spanning stretches (helical) occupy residues Leu4–Thr24, Leu55–Leu75, Met80–Phe100, Ile110–Val130, and Phe152–Tyr174.

This sequence belongs to the PlsY family. In terms of assembly, probably interacts with PlsX.

The protein resides in the cell inner membrane. The enzyme catalyses an acyl phosphate + sn-glycerol 3-phosphate = a 1-acyl-sn-glycero-3-phosphate + phosphate. The protein operates within lipid metabolism; phospholipid metabolism. Catalyzes the transfer of an acyl group from acyl-phosphate (acyl-PO(4)) to glycerol-3-phosphate (G3P) to form lysophosphatidic acid (LPA). This enzyme utilizes acyl-phosphate as fatty acyl donor, but not acyl-CoA or acyl-ACP. The sequence is that of Glycerol-3-phosphate acyltransferase from Paramagnetospirillum magneticum (strain ATCC 700264 / AMB-1) (Magnetospirillum magneticum).